A 521-amino-acid chain; its full sequence is Sodium/hydrogen exchanger 5 (521 aa).

Residues 1 to 23 (MEEVMISPVEHDPQGQVKQQQAA) lie on the Cytoplasmic side of the membrane. The chain crosses the membrane as a helical span at residues 24 to 44 (GVGILLQIMMLVLSFVLGHVL). Residues 45–48 (RRHR) lie on the Lumenal side of the membrane. The helical transmembrane segment at 49 to 69 (FHYLPEASGSLLIGLIVGILA) threads the bilayer. Topologically, residues 70–86 (NISDTETSIRTWFNFHE) are cytoplasmic. Residues 87 to 107 (EFFFLFLLPPIIFQSGFSLQP) constitute an intramembrane region (helical). The Cytoplasmic segment spans residues 108 to 115 (KPFFSNFG). The chain crosses the membrane as a helical span at residues 116–136 (AIVTFAIIGTFVASVVTGGLV). Residues 137–141 (YLGGS) are Lumenal-facing. 2 intramembrane regions (helical) span residues 142-162 (MYLM…LISA) and 166-186 (VTVL…ALVF). The Lumenal portion of the chain corresponds to 187-222 (GESVLNDAMAISLYRTMSLVNRQSSSGEHFFMVVIR). Residues 223-243 (FFETFAGSMSAGVGVGFTSAL) traverse the membrane as a helical segment. Over 244 to 271 (LFKYAGLDTENLQNLECCLFVLFPYFSY) the chain is Cytoplasmic. The helical transmembrane segment at 272–292 (MLAEGVGLSGIVSILFTGIVM) threads the bilayer. Residues 293 to 310 (KRYTFSNLSEASQSFVSS) are Lumenal-facing. N-linked (GlcNAc...) asparagine glycosylation occurs at N299. The chain crosses the membrane as a helical span at residues 311-331 (FFHLISSLAETFTFIYMGFDI). Topologically, residues 332 to 340 (AMEQHSWSH) are cytoplasmic. Residues 341–361 (VGFILFSILFIGVARAVNVFG) traverse the membrane as a helical segment. The Lumenal segment spans residues 362–382 (CAYLVNLFRQENQKIPMKHQK). Residues 383 to 402 (ALWYSGLRGAMAFALALQSL) traverse the membrane as a helical segment. Residues 403-411 (HDLPEGHGQ) lie on the Cytoplasmic side of the membrane. Residues 412–432 (IIFTATTTIVVVTVLLIGGST) traverse the membrane as a helical segment. Residues 433 to 521 (GKMLEALEVV…NSGDGDGDGE (89 aa)) lie on the Lumenal side of the membrane. The segment at 453–480 (GFEESDHQYVPPPFSIGASSDEDTSSSG) is disordered. Low complexity predominate over residues 467 to 480 (SIGASSDEDTSSSG).

This sequence belongs to the monovalent cation:proton antiporter 1 (CPA1) transporter (TC 2.A.36) family. Expressed in roots, leaves, stems, flowers and siliques. Detected at low levels in roots and shoots.

The protein localises to the endosome membrane. It localises to the golgi apparatus. It is found in the trans-Golgi network membrane. The protein resides in the golgi stack membrane. The enzyme catalyses Na(+)(in) + H(+)(out) = Na(+)(out) + H(+)(in). It carries out the reaction K(+)(in) + H(+)(out) = K(+)(out) + H(+)(in). In terms of biological role, involved in trafficking to the vacuole. Required for cell proliferation and cell expansion, but not for cell differentiation. Acts in low affinity electroneutral exchange of protons for cations such as Na(+) or K(+) across membranes. May also exchange Li(+) and Cs(+) with a lower affinity. This chain is Sodium/hydrogen exchanger 5 (NHX5), found in Arabidopsis thaliana (Mouse-ear cress).